Reading from the N-terminus, the 208-residue chain is Cysteine-rich protein 2 (208 aa).

An LIM zinc-binding 1 domain is found at cysteine 5–cysteine 57. Position 23 is an N6-acetyllysine (lysine 23). A disordered region spans residues threonine 98–threonine 117. A Phosphoserine modification is found at serine 104. The segment covering serine 104–serine 115 has biased composition (low complexity). The 53-residue stretch at cysteine 126–cysteine 178 folds into the LIM zinc-binding 2 domain. 2 positions are modified to N6-acetyllysine: lysine 138 and lysine 144.

Interacts with TGFB1I1.

In Bos taurus (Bovine), this protein is Cysteine-rich protein 2 (CRIP2).